Consider the following 117-residue polypeptide: MAAAGFYPPRLLPQVLISTGPGFYEDEHHRLWMVAKLETCSHSPYCNKIETCVTVHLWQMTRYPQEPAPYNPMNYNFLPMTWRLASMNTYRGTDAMHWRLLNHSQVGDTVQLILMLE.

It belongs to the TCL1 family.

The chain is Protein TCL1B2 (Tcl1b2) from Mus musculus (Mouse).